Here is a 101-residue protein sequence, read N- to C-terminus: Small ribosomal subunit protein uS10 (101 aa).

The protein belongs to the universal ribosomal protein uS10 family. Part of the 30S ribosomal subunit.

In terms of biological role, involved in the binding of tRNA to the ribosomes. The protein is Small ribosomal subunit protein uS10 of Brachyspira pilosicoli (Serpulina pilosicoli).